We begin with the raw amino-acid sequence, 679 residues long: Protein hook (679 aa).

One can recognise a Calponin-homology (CH) domain in the interval 6 to 123; sequence NEMYYSLLEW…RLLQLVLGCA (118 aa). Coiled coils occupy residues 135–437 and 480–574; these read EIMC…LKCG and QTAL…QEIL.

It belongs to the hook family. As to quaternary structure, homodimer. Interacts with microtubules via its N-terminus.

The protein localises to the cytoplasm. It is found in the cytoskeleton. The protein resides in the endosome. Its subcellular location is the synapse. Functionally, involved in endocytic trafficking by stabilizing organelles of the endocytic pathway. Probably acts as a cytoskeletal linker protein required to tether endosome vesicles to the cytoskeleton. Involved in modulation of endocytosis at stages required for down-regulation of membrane proteins that control synapse size. Not involved in synaptic vesicle recycling. Required in R7 cells for boss endocytosis into multivesicular bodies (MVBs). Has a role in regulating adult longevity. This is Protein hook from Drosophila yakuba (Fruit fly).